A 53-amino-acid chain; its full sequence is Abaecin (53 aa).

Positions 1-19 (MKVVIFIFALLATICAAFA) are cleaved as a signal peptide.

The protein resides in the secreted. Its function is as follows. This peptide has bactericidal activity. This is Abaecin from Apis mellifera (Honeybee).